Consider the following 230-residue polypeptide: RNA-binding riboflavin kinase RibR (230 aa).

This sequence belongs to the RibR family.

It carries out the reaction riboflavin + ATP = FMN + ADP + H(+). May be directly involved in the regulation of the rib genes. C-terminal part of RibR specifically binds to RFN of the rib leader of the riboflavin biosynthetic operon. The RFN element is a sequence within the rib-leader mRNA reported to serve as a receptor for an FMN-dependent riboswitch. Possibly, RibR produces the comodulator FMN through its own N-terminal flavokinase activity. FMN-activated RibR may stabilize the anti-anti terminator structure of RFN mRNA, causing transcription termination of the rib genes in trans. The sequence is that of RNA-binding riboflavin kinase RibR (ribR) from Bacillus subtilis (strain 168).